The sequence spans 350 residues: 5'-tyrosyl-DNA phosphodiesterase (350 aa).

An interaction with 5' end of substrate DNA region spans residues 113–117 (NIDGL). Mg(2+)-binding residues include Asp-115 and Glu-145. The interval 219–224 (HLESMR) is interaction with 5' end of substrate DNA. The active-site Proton donor/acceptor is Asp-258. The segment at 260–262 (NLR) is interaction with 5' end of substrate DNA.

This sequence belongs to the CCR4/nocturin family. TTRAP/TDP2 subfamily. Requires Mg(2+) as cofactor. Mn(2+) serves as cofactor.

It localises to the nucleus. Its subcellular location is the PML body. Functionally, DNA repair enzyme that can remove a variety of covalent adducts from DNA through hydrolysis of a 5'-phosphodiester bond, giving rise to DNA with a free 5' phosphate. Catalyzes the hydrolysis of dead-end complexes between DNA and the topoisomerase 2 (top2) active site tyrosine residue. Hydrolyzes 5'-phosphoglycolates on protruding 5' ends on DNA double-strand breaks (DSBs) due to DNA damage by radiation and free radicals. The chain is 5'-tyrosyl-DNA phosphodiesterase from Caenorhabditis briggsae.